Reading from the N-terminus, the 112-residue chain is Cell cycle protein GpsB (112 aa).

Residues 38-72 (IKDYEAFHKEFEQLKQQNARLKRELEEQKLVATQV) adopt a coiled-coil conformation.

The protein belongs to the GpsB family. In terms of assembly, forms polymers through the coiled coil domains. Interacts with PBP1, MreC and EzrA.

The protein localises to the cytoplasm. Functionally, divisome component that associates with the complex late in its assembly, after the Z-ring is formed, and is dependent on DivIC and PBP2B for its recruitment to the divisome. Together with EzrA, is a key component of the system that regulates PBP1 localization during cell cycle progression. Its main role could be the removal of PBP1 from the cell pole after pole maturation is completed. Also contributes to the recruitment of PBP1 to the division complex. Not essential for septum formation. The protein is Cell cycle protein GpsB of Bacillus cereus (strain ZK / E33L).